The primary structure comprises 689 residues: Elongation factor G (689 aa).

In terms of domain architecture, tr-type G spans A9–L283. Residues A18 to T25, D82 to H86, and N136 to D139 contribute to the GTP site.

Belongs to the TRAFAC class translation factor GTPase superfamily. Classic translation factor GTPase family. EF-G/EF-2 subfamily.

It is found in the cytoplasm. In terms of biological role, catalyzes the GTP-dependent ribosomal translocation step during translation elongation. During this step, the ribosome changes from the pre-translocational (PRE) to the post-translocational (POST) state as the newly formed A-site-bound peptidyl-tRNA and P-site-bound deacylated tRNA move to the P and E sites, respectively. Catalyzes the coordinated movement of the two tRNA molecules, the mRNA and conformational changes in the ribosome. This is Elongation factor G from Clostridium botulinum (strain ATCC 19397 / Type A).